The following is a 579-amino-acid chain: Putative truncated flagellar export/assembly protein LfhA (579 aa).

A run of 3 helical transmembrane segments spans residues 86 to 106, 124 to 144, and 177 to 197; these read AIAG…IGIF, IGDG…AAII, and FVLA…SALL.

Belongs to the FHIPEP (flagella/HR/invasion proteins export pore) family.

It localises to the cell inner membrane. This is Putative truncated flagellar export/assembly protein LfhA from Escherichia coli (strain K12).